Consider the following 63-residue polypeptide: MKAKELREKSVEELNAELLNLLREQFNLRMQAASGQLQQTHLLKQVRRDVARVKTLLTQKAGA.

This sequence belongs to the universal ribosomal protein uL29 family.

The protein is Large ribosomal subunit protein uL29 of Klebsiella pneumoniae (strain 342).